Here is a 129-residue protein sequence, read N- to C-terminus: uncharacterized protein (129 aa).

The span at 84 to 98 (QKTVSKKYKSRKGRR) shows a compositional bias: basic residues. The segment at 84–129 (QKTVSKKYKSRKGRRYTRERNISSEKNKTDKSHKVRVGKIQNINND) is disordered. Residues 99 to 115 (YTRERNISSEKNKTDKS) are compositionally biased toward basic and acidic residues.

This is an uncharacterized protein from Acanthamoeba polyphaga mimivirus (APMV).